The primary structure comprises 94 residues: Large ribosomal subunit protein uL23 (94 aa).

This sequence belongs to the universal ribosomal protein uL23 family. As to quaternary structure, part of the 50S ribosomal subunit. Contacts protein L29, and trigger factor when it is bound to the ribosome.

In terms of biological role, one of the early assembly proteins it binds 23S rRNA. One of the proteins that surrounds the polypeptide exit tunnel on the outside of the ribosome. Forms the main docking site for trigger factor binding to the ribosome. The sequence is that of Large ribosomal subunit protein uL23 from Lysinibacillus sphaericus (strain C3-41).